The sequence spans 487 residues: MVLSQLGSSLVTALRKMTSSTVVDEEVINTLLKEIETSLLGEDVNPIFIRQMVNNIKKKINSEDIPDGIDKRKLIKDSVFEELINLVDPKTEAFKPKKGKTCVLMMVGLQGAGKTTTITKLALYYKNRGYKPAVVGADTFRAGAYEQLQMNAKRAGVPFFGIKEESDPVKVASEGVRTFRKEKNDIILVDTSGRHKQDKELFKEMQSVRDAIKPDSIIFVMDGAIGQAAFGQAKAFKDAVEVGSVIITKLDGHSNGGGALSAVAATKSPIIFIGTGEKVNEIEEFDAESFVRKLLGMGDLKGIAKLAKDFAENAEYKTMVKHLQEGTLTVRDWKEQLSNLQKMGQLGNIMQMIGLNHPMFQGGNIEKKFKVFMVILDSMTDRELDGSAKTMLNDESRIRRLARGSGRDIREVNELFEQIKLFQQCIDRLPKAMRAQLGNCNAQPNEAAMMQQMQRMLPKGVNQAQLQQLMKQMNAAGLGGTGKKGKK.

The interval 1-295 is G-domain; it reads MVLSQLGSSL…DAESFVRKLL (295 aa). GTP is bound by residues 108 to 115, 190 to 194, and 248 to 251; these read GLQGAGKT, DTSGR, and TKLD. The M-domain stretch occupies residues 296–487; that stretch reads GMGDLKGIAK…LGGTGKKGKK (192 aa).

Belongs to the GTP-binding SRP family. SRP54 subfamily. Component of a signal recognition particle (SRP) complex that consists of a 7SL RNA molecule of 300 nucleotides and six protein subunits: SRP72, SRP68, SRP54, SRP19, SRP14 and SRP9.

Its subcellular location is the cytoplasm. The protein resides in the endoplasmic reticulum. It carries out the reaction GTP + H2O = GDP + phosphate + H(+). In terms of biological role, component of the signal recognition particle (SRP) complex, a ribonucleoprotein complex that mediates the cotranslational targeting of secretory and membrane proteins to the endoplasmic reticulum (ER). As part of the SRP complex, associates with the SRP receptor (SR) component SRPRA to target secretory proteins to the endoplasmic reticulum membrane. Binds to the signal sequence of presecretory proteins when they emerge from the ribosomes. Displays basal GTPase activity, and stimulates reciprocal GTPase activation of the SR subunit SRPRA. Forms a guanosine 5'-triphosphate (GTP)-dependent complex with the SR subunit SRPRA. SR compaction and GTPase mediated rearrangement of SR drive SRP-mediated cotranslational protein translocation into the ER. Requires the presence of SRP9/SRP14 and/or SRP19 to stably interact with RNA. This chain is Signal recognition particle subunit SRP54, found in Entamoeba histolytica (strain ATCC 30459 / HM-1:IMSS / ABRM).